The primary structure comprises 881 residues: Mechanosensitive ion channel protein 4 (881 aa).

The disordered stretch occupies residues 35–245 (FWHNDKSSKP…EEEDPFSEED (211 aa)). Positions 56-66 (FMRRSSEKSEE) are enriched in basic and acidic residues. 3 stretches are compositionally biased toward polar residues: residues 73–82 (LINQFLNKQK), 100–118 (QKNT…SASP), and 206–230 (TPRS…NQGG). The segment covering 234 to 245 (LEEEEDPFSEED) has biased composition (acidic residues). Transmembrane regions (helical) follow at residues 255–275 (ICVW…SLIC), 297–317 (VMVL…KLFV), 339–359 (KPVQ…FLFD), and 377–397 (VLIC…LVKV). The disordered stretch occupies residues 457–501 (GPKAVSSPPQVTVGSGRLQKSPSRVGKSPVLSRSGSKKEGGEEGI). Positions 463–478 (SPPQVTVGSGRLQKSP) are enriched in polar residues. Residues 492 to 501 (SKKEGGEEGI) show a composition bias toward basic and acidic residues. The next 2 helical transmembrane spans lie at 643 to 663 (IVDV…LGIA) and 678 to 698 (VVFV…FVFV).

Belongs to the MscS (TC 1.A.23) family.

The protein resides in the membrane. Functionally, mechanosensitive channel that opens in response to stretch forces in the membrane lipid bilayer. The protein is Mechanosensitive ion channel protein 4 (MSL4) of Arabidopsis thaliana (Mouse-ear cress).